A 391-amino-acid polypeptide reads, in one-letter code: Secreted aspartic protease 1 (391 aa).

The signal sequence occupies residues 1 to 18; it reads MFLKNIFIALAIALLVDA. Residues 19-50 constitute a propeptide, activation peptide; sequence SPAKRSPGFVTLDFDVIKTPVNATGQEGKVKR. N-linked (GlcNAc...) asparagine glycosylation is present at asparagine 40. The Peptidase A1 domain maps to 64 to 377; that stretch reads YAADITIGSN…DLDDDKISLA (314 aa). The active site involves aspartate 82. A pepstatin A-binding site is contributed by 82-84; sequence DTG. A disulfide bridge connects residues cysteine 97 and cysteine 109. Aspartate 241 and aspartate 263 together coordinate Zn(2+). Aspartate 267 is an active-site residue. Position 267-271 (267-271) interacts with pepstatin A; sequence DSGTT. The cysteines at positions 305 and 343 are disulfide-linked.

It belongs to the peptidase A1 family. Monomer.

It is found in the secreted. The enzyme catalyses Preferential cleavage at the carboxyl of hydrophobic amino acids, but fails to cleave 15-Leu-|-Tyr-16, 16-Tyr-|-Leu-17 and 24-Phe-|-Phe-25 of insulin B chain. Activates trypsinogen, and degrades keratin.. Inhibited by pepstatin A analogs and squash aspartic peptidase inhibitor (SQAPI). Secreted aspartic peptidases (SAPs) are a group of ten acidic hydrolases considered as key virulence factors. These enzymes supply the fungus with nutrient amino acids as well as are able to degrade the selected host's proteins involved in the immune defense. Induces host inflammatory cytokine production in a proteolytic activity-independent way. Plays a role in tissue damage during superficial infection. Moreover, acts toward human hemoglobin though limited proteolysis to generate a variety of antimicrobial hemocidins, enabling to compete with the other microorganisms of the same physiological niche using the microbicidal peptides generated from the host protein. Its function is as follows. Plays a key role in defense against host by cleaving histatin-5 (Hst 5), a peptide from human saliva that carries out fungicidal activity. The cleavage rate decreases in an order of SAP2 &gt; SAP9 &gt; SAP3 &gt; SAP7 &gt; SAP4 &gt; SAP1 &gt; SAP8. The first cleavage occurs between residues 'Lys-17' and 'His-18' of Hst 5, giving DSHAKRHHGYKRKFHEK and HHSHRGY peptides. Further fragmentation by SAP1 results in AKRHHGYKRKFHEK and AKRHHGY products. The protein is Secreted aspartic protease 1 of Candida albicans (Yeast).